The chain runs to 94 residues: Sapecin (94 aa).

The first 23 residues, 1–23 (MKSFIVLAVTLCLAAFFMGQSVA), serve as a signal peptide directing secretion. Positions 24–54 (SPAAAAEESKFVDGLHALKTIEPELHGRYKR) are excised as a propeptide. Cystine bridges form between C57-C84, C70-C90, and C74-C92.

This sequence belongs to the invertebrate defensin family. Type 1 subfamily. Hemocytes and fat body.

The protein resides in the secreted. Functionally, sapecins, which are potent bactericidal proteins, are produced in response to injury. Sapecin is cytotoxic to Gram-positive bacteria, and to a lesser extent against Gram-negative bacteria. This is Sapecin from Sarcophaga peregrina (Flesh fly).